A 212-amino-acid polypeptide reads, in one-letter code: Ras-like protein (212 aa).

GTP is bound at residue 15–22 (GGGGVGKS). Residues 37-45 (YDPTIEDSY) carry the Effector region motif. GTP is bound by residues 62–66 (DTAGQ) and 121–124 (NKCD). 2 S-palmitoyl cysteine lipidation sites follow: Cys-205 and Cys-206. Position 209 is a cysteine methyl ester (Cys-209). Cys-209 is lipidated: S-geranylgeranyl cysteine. Residues 210-212 (IVM) constitute a propeptide, removed in mature form.

It belongs to the small GTPase superfamily. Ras family.

Its subcellular location is the cell membrane. The enzyme catalyses GTP + H2O = GDP + phosphate + H(+). With respect to regulation, alternates between an inactive form bound to GDP and an active form bound to GTP. Activated by a guanine nucleotide-exchange factor (GEF) and inactivated by a GTPase-activating protein (GAP). This chain is Ras-like protein (rasA), found in Emericella nidulans (strain FGSC A4 / ATCC 38163 / CBS 112.46 / NRRL 194 / M139) (Aspergillus nidulans).